The primary structure comprises 213 residues: ATP phosphoribosyltransferase (213 aa).

The protein belongs to the ATP phosphoribosyltransferase family. Short subfamily. As to quaternary structure, heteromultimer composed of HisG and HisZ subunits.

It localises to the cytoplasm. The catalysed reaction is 1-(5-phospho-beta-D-ribosyl)-ATP + diphosphate = 5-phospho-alpha-D-ribose 1-diphosphate + ATP. Its pathway is amino-acid biosynthesis; L-histidine biosynthesis; L-histidine from 5-phospho-alpha-D-ribose 1-diphosphate: step 1/9. Functionally, catalyzes the condensation of ATP and 5-phosphoribose 1-diphosphate to form N'-(5'-phosphoribosyl)-ATP (PR-ATP). Has a crucial role in the pathway because the rate of histidine biosynthesis seems to be controlled primarily by regulation of HisG enzymatic activity. This Crocosphaera subtropica (strain ATCC 51142 / BH68) (Cyanothece sp. (strain ATCC 51142)) protein is ATP phosphoribosyltransferase.